The chain runs to 165 residues: Cytochrome c-type biogenesis protein CcmE (165 aa).

The Cytoplasmic segment spans residues 1-7 (MTRKQKR). The chain crosses the membrane as a helical; Signal-anchor for type II membrane protein span at residues 8–28 (LAIIGGGMSFIVAAVLLVMFA). At 29–165 (FGQSIAYFYM…ASGDKTGATK (137 aa)) the chain is on the periplasmic side. Heme-binding residues include His123 and Tyr127. The disordered stretch occupies residues 138-165 (DKGLWQQGAEGAAPAASAASGDKTGATK). The segment covering 145-158 (GAEGAAPAASAASG) has biased composition (low complexity).

This sequence belongs to the CcmE/CycJ family.

It localises to the cell inner membrane. Heme chaperone required for the biogenesis of c-type cytochromes. Transiently binds heme delivered by CcmC and transfers the heme to apo-cytochromes in a process facilitated by CcmF and CcmH. This Agrobacterium fabrum (strain C58 / ATCC 33970) (Agrobacterium tumefaciens (strain C58)) protein is Cytochrome c-type biogenesis protein CcmE.